Here is a 320-residue protein sequence, read N- to C-terminus: Endolytic peptidoglycan transglycosylase RlpA (320 aa).

The protein belongs to the RlpA family.

Functionally, lytic transglycosylase with a strong preference for naked glycan strands that lack stem peptides. In Rickettsia prowazekii (strain Madrid E), this protein is Endolytic peptidoglycan transglycosylase RlpA.